The chain runs to 158 residues: SsrA-binding protein (158 aa).

The disordered stretch occupies residues 135 to 158 (DKRKTLKDRDWERDKQRGFKKDLD). The segment covering 141-158 (KDRDWERDKQRGFKKDLD) has biased composition (basic and acidic residues).

It belongs to the SmpB family.

It localises to the cytoplasm. Its function is as follows. Required for rescue of stalled ribosomes mediated by trans-translation. Binds to transfer-messenger RNA (tmRNA), required for stable association of tmRNA with ribosomes. tmRNA and SmpB together mimic tRNA shape, replacing the anticodon stem-loop with SmpB. tmRNA is encoded by the ssrA gene; the 2 termini fold to resemble tRNA(Ala) and it encodes a 'tag peptide', a short internal open reading frame. During trans-translation Ala-aminoacylated tmRNA acts like a tRNA, entering the A-site of stalled ribosomes, displacing the stalled mRNA. The ribosome then switches to translate the ORF on the tmRNA; the nascent peptide is terminated with the 'tag peptide' encoded by the tmRNA and targeted for degradation. The ribosome is freed to recommence translation, which seems to be the essential function of trans-translation. In Psychrobacter arcticus (strain DSM 17307 / VKM B-2377 / 273-4), this protein is SsrA-binding protein.